Here is an 86-residue protein sequence, read N- to C-terminus: Molybdopterin synthase sulfur carrier subunit (86 aa).

The residue at position 86 (Gly-86) is a 1-thioglycine; alternate. Residue Gly-86 is modified to Glycyl adenylate; alternate.

Belongs to the MoaD family. MOCS2A subfamily. In terms of assembly, heterotetramer; composed of 2 small (mocs2s) and 2 large (mocs2l) subunits. In terms of processing, C-terminal thiocarboxylation occurs in 2 steps, it is first acyl-adenylated (-COAMP) via the hesA/moeB/thiF part of mocs3, then thiocarboxylated (-COSH) via the rhodanese domain of mocs3.

It localises to the cytoplasm. It functions in the pathway cofactor biosynthesis; molybdopterin biosynthesis. In terms of biological role, acts as a sulfur carrier required for molybdopterin biosynthesis. Component of the molybdopterin synthase complex that catalyzes the conversion of precursor Z into molybdopterin by mediating the incorporation of 2 sulfur atoms into precursor Z to generate a dithiolene group. In the complex, serves as sulfur donor by being thiocarboxylated (-COSH) at its C-terminus by mocs3. After interaction with mocs2l, the sulfur is then transferred to precursor Z to form molybdopterin. This is Molybdopterin synthase sulfur carrier subunit (mocs2s) from Dictyostelium discoideum (Social amoeba).